The chain runs to 463 residues: Formate-nitrite transporter 2 (463 aa).

Over 1-100 (MCSIPPLRLL…VKKTQLRIDR (100 aa)) the chain is Cytoplasmic. A helical membrane pass occupies residues 101-121 (LLLQAFMAGIFVAMAGHCCTV). The Extracellular portion of the chain corresponds to 122-142 (LAGSYPTDPGDPLAVAKPTQK). A helical transmembrane segment spans residues 143-163 (FIYGALFPVAFICIILTGAEL). Residues 164 to 189 (FTGNTMTMLICYFQKRVTMLQLGVNW) are Cytoplasmic-facing. The helical transmembrane segment at 190–210 (LGSLAGNWLGALFGAYFLSYL) threads the bilayer. The Extracellular portion of the chain corresponds to 211 to 237 (TGALGDEHVRQFLFRTCVNKISYGWGE). The helical transmembrane segment at 238–258 (CFLRGVGCNTFVCLAVWAVIA) threads the bilayer. Residues 259-265 (SENVAGK) are Cytoplasmic-facing. Residues 266–286 (VLVMWFPIVAFCVGGYEHIIA) form a helical membrane-spanning segment. At 287–305 (NMYTLQAGLMAGAPVAILD) the chain is on the extracellular side. A helical transmembrane segment spans residues 306 to 326 (VIAFNFLPTLLGNIVGGCLLV). Topologically, residues 327–463 (GAVYAYNFYP…QTAESVAQQV (137 aa)) are cytoplasmic. The tract at residues 424 to 463 (SGNLSTHARLDLPNRPVEPPSDGLEVTPQSQTAESVAQQV) is disordered. The span at 450 to 463 (TPQSQTAESVAQQV) shows a compositional bias: polar residues.

It belongs to the FNT transporter (TC 1.A.16) family. As to quaternary structure, homopentamer.

It localises to the cell membrane. The catalysed reaction is (S)-lactate(in) + H(+)(in) = (S)-lactate(out) + H(+)(out). It catalyses the reaction formate(in) + H(+)(in) = formate(out) + H(+)(out). The enzyme catalyses pyruvate(out) + H(+)(out) = pyruvate(in) + H(+)(in). It carries out the reaction acetate(out) + H(+)(out) = acetate(in) + H(+)(in). With respect to regulation, inhibited by p-chloromercuribenzene sulfonate (pCMBS). Methyl methanethiosulfonate (MMTS) inhibits L-lactate but not formate transport. Inhibited by the Malaria Box compound MMV007839. Inhibited by BH-296, BH-317, BH-326 and BH-388 compounds. Functionally, monocarboxylate-proton symporter; active in acidic-to-neutral pH range. Transports L-lactate and formate. The sequence is that of Formate-nitrite transporter 2 from Toxoplasma gondii (strain ATCC 50611 / Me49).